Here is a 671-residue protein sequence, read N- to C-terminus: DNA ligase (671 aa).

Residues 32–36 (DAEYD), 81–82 (SL), and glutamate 113 contribute to the NAD(+) site. Lysine 115 functions as the N6-AMP-lysine intermediate in the catalytic mechanism. NAD(+) is bound by residues arginine 136, glutamate 173, lysine 290, and lysine 314. 4 residues coordinate Zn(2+): cysteine 408, cysteine 411, cysteine 426, and cysteine 432. The 79-residue stretch at 593–671 (EIDSPFAGKT…EAEMIRLLGA (79 aa)) folds into the BRCT domain.

The protein belongs to the NAD-dependent DNA ligase family. LigA subfamily. Mg(2+) serves as cofactor. It depends on Mn(2+) as a cofactor.

It carries out the reaction NAD(+) + (deoxyribonucleotide)n-3'-hydroxyl + 5'-phospho-(deoxyribonucleotide)m = (deoxyribonucleotide)n+m + AMP + beta-nicotinamide D-nucleotide.. Its function is as follows. DNA ligase that catalyzes the formation of phosphodiester linkages between 5'-phosphoryl and 3'-hydroxyl groups in double-stranded DNA using NAD as a coenzyme and as the energy source for the reaction. It is essential for DNA replication and repair of damaged DNA. This Salmonella paratyphi B (strain ATCC BAA-1250 / SPB7) protein is DNA ligase.